Here is a 26-residue protein sequence, read N- to C-terminus: Coenzyme PQQ synthesis protein A (26 aa).

A cross-link (pyrroloquinoline quinone (Glu-Tyr)) is located at residues 16 to 20 (EINMY).

This sequence belongs to the PqqA family.

The protein operates within cofactor biosynthesis; pyrroloquinoline quinone biosynthesis. Its function is as follows. Required for coenzyme pyrroloquinoline quinone (PQQ) biosynthesis. PQQ is probably formed by cross-linking a specific glutamate to a specific tyrosine residue and excising these residues from the peptide. This is Coenzyme PQQ synthesis protein A from Cereibacter sphaeroides (strain ATCC 17029 / ATH 2.4.9) (Rhodobacter sphaeroides).